Here is a 274-residue protein sequence, read N- to C-terminus: Large ribosomal subunit protein uL2 (274 aa).

2 disordered regions span residues 28–54 (APYA…TRHI) and 223–265 (VAMN…KRTD). Positions 39 to 48 (KSGGRNNNGR) are enriched in low complexity.

It belongs to the universal ribosomal protein uL2 family. As to quaternary structure, part of the 50S ribosomal subunit. Forms a bridge to the 30S subunit in the 70S ribosome.

In terms of biological role, one of the primary rRNA binding proteins. Required for association of the 30S and 50S subunits to form the 70S ribosome, for tRNA binding and peptide bond formation. It has been suggested to have peptidyltransferase activity; this is somewhat controversial. Makes several contacts with the 16S rRNA in the 70S ribosome. In Alteromonas mediterranea (strain DSM 17117 / CIP 110805 / LMG 28347 / Deep ecotype), this protein is Large ribosomal subunit protein uL2.